Reading from the N-terminus, the 122-residue chain is Large ribosomal subunit protein bL12 (122 aa).

It belongs to the bacterial ribosomal protein bL12 family. As to quaternary structure, homodimer. Part of the ribosomal stalk of the 50S ribosomal subunit. Forms a multimeric L10(L12)X complex, where L10 forms an elongated spine to which 2 to 4 L12 dimers bind in a sequential fashion. Binds GTP-bound translation factors.

In terms of biological role, forms part of the ribosomal stalk which helps the ribosome interact with GTP-bound translation factors. Is thus essential for accurate translation. This chain is Large ribosomal subunit protein bL12, found in Sulfurimonas denitrificans (strain ATCC 33889 / DSM 1251) (Thiomicrospira denitrificans (strain ATCC 33889 / DSM 1251)).